A 436-amino-acid polypeptide reads, in one-letter code: Glutamyl-tRNA reductase 2 (436 aa).

Substrate contacts are provided by residues 49–52, Ser-106, 111–113, and Gln-117; these read TCNR and EPQ. Catalysis depends on Cys-50, which acts as the Nucleophile. 186 to 191 is an NADP(+) binding site; the sequence is GAGKMC.

It belongs to the glutamyl-tRNA reductase family. In terms of assembly, homodimer.

It carries out the reaction (S)-4-amino-5-oxopentanoate + tRNA(Glu) + NADP(+) = L-glutamyl-tRNA(Glu) + NADPH + H(+). Its pathway is porphyrin-containing compound metabolism; protoporphyrin-IX biosynthesis; 5-aminolevulinate from L-glutamyl-tRNA(Glu): step 1/2. Catalyzes the NADPH-dependent reduction of glutamyl-tRNA(Glu) to glutamate 1-semialdehyde (GSA). In Koribacter versatilis (strain Ellin345), this protein is Glutamyl-tRNA reductase 2.